Here is a 153-residue protein sequence, read N- to C-terminus: uncharacterized protein (153 aa).

The first 19 residues, 1 to 19, serve as a signal peptide directing secretion; the sequence is MKACLLLFFYFSFICQLHG.

This is an uncharacterized protein from Escherichia coli (strain K12).